We begin with the raw amino-acid sequence, 155 residues long: Transcription antitermination protein NusB (155 aa).

This sequence belongs to the NusB family.

Involved in transcription antitermination. Required for transcription of ribosomal RNA (rRNA) genes. Binds specifically to the boxA antiterminator sequence of the ribosomal RNA (rrn) operons. The polypeptide is Transcription antitermination protein NusB (Mesorhizobium japonicum (strain LMG 29417 / CECT 9101 / MAFF 303099) (Mesorhizobium loti (strain MAFF 303099))).